We begin with the raw amino-acid sequence, 492 residues long: Stromelysin-3 (492 aa).

An N-terminal signal peptide occupies residues Met1–Ala35. Residues Arg36–Arg101 constitute a propeptide, activation peptide. The Cysteine switch motif lies at Leu82–Leu89. Positions 84, 168, and 170 each coordinate Zn(2+). 4 residues coordinate Ca(2+): Asp175, Gly176, Gly178, and Ile180. 3 residues coordinate Zn(2+): His183, His196, and His219. Glu220 is an active-site residue. Zn(2+) contacts are provided by His223 and His229. Hemopexin repeat units lie at residues Pro295 to Leu343, Pro344 to Leu386, Gly388 to Val436, and Pro437 to Cys484. Cys298 and Cys484 are disulfide-bonded.

Belongs to the peptidase M10A family. Ca(2+) serves as cofactor. Zn(2+) is required as a cofactor. The precursor is cleaved by a furin endopeptidase. As to expression, specifically expressed in the mammary gland during apoptosis.

The protein localises to the secreted. Its subcellular location is the extracellular space. It localises to the extracellular matrix. May play an important role in the progression of epithelial malignancies. The sequence is that of Stromelysin-3 (Mmp11) from Mus musculus (Mouse).